The following is a 211-amino-acid chain: Protein-L-isoaspartate O-methyltransferase (211 aa).

The active site involves serine 62.

This sequence belongs to the methyltransferase superfamily. L-isoaspartyl/D-aspartyl protein methyltransferase family.

It is found in the cytoplasm. It catalyses the reaction [protein]-L-isoaspartate + S-adenosyl-L-methionine = [protein]-L-isoaspartate alpha-methyl ester + S-adenosyl-L-homocysteine. Catalyzes the methyl esterification of L-isoaspartyl residues in peptides and proteins that result from spontaneous decomposition of normal L-aspartyl and L-asparaginyl residues. It plays a role in the repair and/or degradation of damaged proteins. The chain is Protein-L-isoaspartate O-methyltransferase from Shewanella putrefaciens (strain CN-32 / ATCC BAA-453).